Reading from the N-terminus, the 591-residue chain is Protein NRT1/ PTR FAMILY 1.1 (591 aa).

The next 11 helical transmembrane spans lie at 68-88 (TVLFMWVAATNFMPLVGAFLS), 98-118 (IVIASLSSLLGMVVLWLTAML), 139-159 (SSQLALLYTAFALISIGSGGI), 186-206 (FFGWYYASSSVAVLIAFTVIV), 216-236 (IGFGIPAILMLLAGFLFVFAS), 329-349 (LKALVKVIPVWSTGIMMSINV), 374-394 (IPAGSFGMFTIIALISWVVLY), 418-438 (MGLGLFISFLAMAVSATVEHY), 460-480 (AMWLVPQYVLHGLAEALTGIG), 496-516 (IAASLFGLGMAVANILASVIL), and 543-563 (YYWVLAILSFVNVIYYVVCSW).

This sequence belongs to the major facilitator superfamily. Proton-dependent oligopeptide transporter (POT/PTR) (TC 2.A.17) family. As to expression, expressed in siliques, shoots and roots. Mainly detected in larger expanded leaves, in the companion cells of major veins.

Its subcellular location is the cell membrane. Functionally, low-affinity nitrate transporter involved in xylem-to-phloem transfer for redistributing nitrate into developing leaves. Not involved in dipeptides transport. The protein is Protein NRT1/ PTR FAMILY 1.1 (NPF1.1) of Arabidopsis thaliana (Mouse-ear cress).